The primary structure comprises 291 residues: ATP synthase subunit a (291 aa).

Transmembrane regions (helical) follow at residues 50-70 (LDSMGWSIGLGVIFCLLFWIV), 108-128 (IAPLALTIFVWIFLMNLMDLI), 129-149 (PVDWIPQVAAFVGANVFGMDP), 161-181 (DPNITLGMSLSVFVLILFYSI), 203-223 (PVAKALLIPVNLILELVTFLA), 241-261 (LIFILIALLPFWIQWALSVPW), and 262-282 (AIFHILVITLQAFIFMMLTIV).

It belongs to the ATPase A chain family. In terms of assembly, F-type ATPases have 2 components, CF(1) - the catalytic core - and CF(0) - the membrane proton channel. CF(1) has five subunits: alpha(3), beta(3), gamma(1), delta(1), epsilon(1). CF(0) has three main subunits: a(1), b(2) and c(9-12). The alpha and beta chains form an alternating ring which encloses part of the gamma chain. CF(1) is attached to CF(0) by a central stalk formed by the gamma and epsilon chains, while a peripheral stalk is formed by the delta and b chains.

It is found in the cell inner membrane. Functionally, key component of the proton channel; it plays a direct role in the translocation of protons across the membrane. The chain is ATP synthase subunit a from Acinetobacter baumannii (strain AB307-0294).